The following is a 288-amino-acid chain: MSGLRALLGLGLPVAGSRLPRVRVQAGACRARPTWWGPQRLISGGRGDVEGMASSAVKYLSQEEAQAVDQELFNEYQFSVDQLMELAGLSCATAIAKVYPPTSLSRSPPTVLVICGPGNNGGDGLVCARHLKLFGYHPTIYYPKRPNKPLFTALVTQCQKMDIPFLDEMPSEPTLIDELYELVVDAIFGFSFKGEVREPFRSILSVLNGLTVPIASIDIPSGWDVERGNSGGIQPDLLISLTAPKKSAAQFTGRYHYLGGRFVPPALEKKYQLNLPPYPDTECVYRLQ.

A mitochondrion-targeting transit peptide spans methionine 1–tyrosine 59. The YjeF N-terminal domain maps to alanine 65 to leucine 275. (6S)-NADPHX is bound at residue asparagine 119–aspartate 123. Asparagine 120 contacts K(+). Lysine 144 is subject to N6-succinyllysine. Aspartate 185 contacts K(+). (6S)-NADPHX is bound by residues glycine 189–glutamate 195 and aspartate 218. K(+) is bound at residue serine 221.

Belongs to the NnrE/AIBP family. In terms of assembly, homodimer. Interacts with APOA1 and APOA2. K(+) is required as a cofactor. Post-translationally, undergoes physiological phosphorylation during sperm capacitation, downstream to PKA activation.

Its subcellular location is the mitochondrion. The protein resides in the secreted. The catalysed reaction is (6R)-NADHX = (6S)-NADHX. It carries out the reaction (6R)-NADPHX = (6S)-NADPHX. Functionally, catalyzes the epimerization of the S- and R-forms of NAD(P)HX, a damaged form of NAD(P)H that is a result of enzymatic or heat-dependent hydration. This is a prerequisite for the S-specific NAD(P)H-hydrate dehydratase to allow the repair of both epimers of NAD(P)HX. Accelerates cholesterol efflux from endothelial cells to high-density lipoprotein (HDL) and thereby regulates angiogenesis. The polypeptide is NAD(P)H-hydrate epimerase (Sus scrofa (Pig)).